Consider the following 235-residue polypeptide: tRNA (guanine-N(1)-)-methyltransferase (235 aa).

Residues G112 and 132–137 (IGDYVI) each bind S-adenosyl-L-methionine.

Belongs to the RNA methyltransferase TrmD family. In terms of assembly, homodimer.

The protein resides in the cytoplasm. It carries out the reaction guanosine(37) in tRNA + S-adenosyl-L-methionine = N(1)-methylguanosine(37) in tRNA + S-adenosyl-L-homocysteine + H(+). Functionally, specifically methylates guanosine-37 in various tRNAs. The chain is tRNA (guanine-N(1)-)-methyltransferase from Anaplasma marginale (strain Florida).